We begin with the raw amino-acid sequence, 54 residues long: Large ribosomal subunit protein bL32c (54 aa).

Positions 1 to 20 are enriched in basic residues; that stretch reads MAVPKKRVSKSKRDMRKTTW. The segment at 1–54 is disordered; that stretch reads MAVPKKRVSKSKRDMRKTTWKNKASKEAKKALSLAKSVSTGKSKSKGFQIKSSN. The span at 31 to 42 shows a compositional bias: low complexity; it reads ALSLAKSVSTGK.

Belongs to the bacterial ribosomal protein bL32 family.

The protein resides in the plastid. Its subcellular location is the chloroplast. This chain is Large ribosomal subunit protein bL32c, found in Chlorokybus atmophyticus (Soil alga).